The primary structure comprises 361 residues: Ribosomal RNA large subunit methyltransferase M (361 aa).

Residues serine 187, 220–223, aspartate 239, aspartate 259, and aspartate 276 each bind S-adenosyl-L-methionine; that span reads CPGG. Catalysis depends on lysine 305, which acts as the Proton acceptor.

The protein belongs to the class I-like SAM-binding methyltransferase superfamily. RNA methyltransferase RlmE family. RlmM subfamily. In terms of assembly, monomer.

The protein resides in the cytoplasm. The enzyme catalyses cytidine(2498) in 23S rRNA + S-adenosyl-L-methionine = 2'-O-methylcytidine(2498) in 23S rRNA + S-adenosyl-L-homocysteine + H(+). In terms of biological role, catalyzes the 2'-O-methylation at nucleotide C2498 in 23S rRNA. This Shewanella amazonensis (strain ATCC BAA-1098 / SB2B) protein is Ribosomal RNA large subunit methyltransferase M.